The sequence spans 370 residues: Vasopressin V2 receptor (370 aa).

The segment covering 1–10 has biased composition (polar residues); it reads MLLASTTSAV. The segment at 1-26 is disordered; that stretch reads MLLASTTSAVPRTLSPPTPAGNGSRE. At 1–37 the chain is on the extracellular side; that stretch reads MLLASTTSAVPRTLSPPTPAGNGSRELLDTRDPLLVQ. A glycan (N-linked (GlcNAc...) asparagine) is linked at N22. A helical transmembrane segment spans residues 38–62; it reads AELALLSTVFVAVALSNGLVLGALA. Residues 63–76 lie on the Cytoplasmic side of the membrane; that stretch reads RRVRRGRWAPMHVF. A helical membrane pass occupies residues 77-97; it reads IGHLCLADLAVALFQVLPQLA. At 98–112 the chain is on the extracellular side; sequence WDATDRFRGPDALCR. A helical transmembrane segment spans residues 113-134; the sequence is AVKYLQMVGMYASSYMILAMTL. Residues 135 to 158 are Cytoplasmic-facing; that stretch reads DRHRAICRPMLAYRHGGGARWNRP. The chain crosses the membrane as a helical span at residues 159–179; the sequence is VLVAWAFSLILSLPQLFIFAQ. Over 180–199 the chain is Extracellular; it reads RDVGNGSGVLDCWAHFAEPW. A helical transmembrane segment spans residues 200–219; that stretch reads GLRAYVTWIALMVFVAPALG. Residues 220–270 are Cytoplasmic-facing; it reads IAACQVLIFREIHSSLVPGPAERAGGCRGGHRTGSPSEGARVSAAMAKTVR. Residues 271 to 292 traverse the membrane as a helical segment; it reads MTLVIVIVYVLCWAPFFLVQLW. Residues 293 to 307 lie on the Extracellular side of the membrane; sequence AAWDPQAPLEGAPFV. A helical membrane pass occupies residues 308–327; it reads LLMLLASLNSCTNPWIYAFF. The Cytoplasmic segment spans residues 328–370; sequence SSSVSSELRSLFCWARSRAPPSLGPQEESCATASSFLAKDTSS. C340 is lipidated: S-palmitoyl cysteine.

This sequence belongs to the G-protein coupled receptor 1 family. Vasopressin/oxytocin receptor subfamily. In terms of assembly, interacts with ARRDC4. Identified in a complex containing at least ARRDC4, V2R and HGS. Interacts with TMEM147.

The protein localises to the cell membrane. In terms of biological role, receptor for arginine vasopressin. The activity of this receptor is mediated by G proteins which activate adenylate cyclase. Involved in renal water reabsorption. In Canis lupus familiaris (Dog), this protein is Vasopressin V2 receptor (AVPR2).